The following is a 320-amino-acid chain: o-succinylbenzoate synthase (320 aa).

Lys-133 functions as the Proton donor in the catalytic mechanism. 3 residues coordinate Mg(2+): Asp-161, Glu-190, and Asp-213. Catalysis depends on Lys-235, which acts as the Proton acceptor.

The protein belongs to the mandelate racemase/muconate lactonizing enzyme family. MenC type 1 subfamily. It depends on a divalent metal cation as a cofactor.

The catalysed reaction is (1R,6R)-6-hydroxy-2-succinyl-cyclohexa-2,4-diene-1-carboxylate = 2-succinylbenzoate + H2O. It participates in quinol/quinone metabolism; 1,4-dihydroxy-2-naphthoate biosynthesis; 1,4-dihydroxy-2-naphthoate from chorismate: step 4/7. It functions in the pathway quinol/quinone metabolism; menaquinone biosynthesis. Its function is as follows. Converts 2-succinyl-6-hydroxy-2,4-cyclohexadiene-1-carboxylate (SHCHC) to 2-succinylbenzoate (OSB). This Salmonella paratyphi C (strain RKS4594) protein is o-succinylbenzoate synthase.